A 67-amino-acid chain; its full sequence is ORF2p protein (67 aa).

The interval 13–18 (WIGHPV) is important for viral replication in intestinal cells. The chain crosses the lipid bilayer at residues 22-38 (AIIYPFVGFIPLSLKEV).

The protein localises to the host cytoplasmic vesicle membrane. Functionally, facilitates virus release from intestinal cells in vitro, possibly through the host autophagic pathway. The chain is ORF2p protein from Homo sapiens (Human).